We begin with the raw amino-acid sequence, 232 residues long: Acetate--CoA ligase [ADP-forming] I subunit beta (232 aa).

Residues 27-63 (KEILKLYGIPVPEFKVARNEEEAVKFSGEIGYPVVMK) form the ATP-grasp domain. An ATP-binding site is contributed by 53–64 (SGEIGYPVVMKI).

This sequence belongs to the acetate CoA ligase beta subunit family. As to quaternary structure, heterotetramer of two alpha and two beta subunits.

Its subcellular location is the cytoplasm. It catalyses the reaction acetate + ATP + CoA = acetyl-CoA + ADP + phosphate. Activity is dependent on magnesium. Catalyzes the reversible formation of acetate and ATP from acetyl-CoA by using ADP and phosphate. Can use other substrates such as isobutyryl-CoA, propionyl-CoA and butyryl-CoA, but not indoleacetyl-CoA, phenylacetyl-CoA or succinyl-CoA. Seems to be involved primarily in the conversion of acetyl-CoA to acetate. Participates in the degradation of branched-chain amino acids via branched-chain-acyl-CoA esters. This Pyrococcus furiosus (strain ATCC 43587 / DSM 3638 / JCM 8422 / Vc1) protein is Acetate--CoA ligase [ADP-forming] I subunit beta.